The primary structure comprises 205 residues: Small ribosomal subunit protein uS3 (205 aa).

In terms of domain architecture, KH type-2 spans 12 to 80 (VRQFLAKELA…PAQINIAEVR (69 aa)).

Belongs to the universal ribosomal protein uS3 family. As to quaternary structure, part of the 30S ribosomal subunit. Forms a tight complex with proteins S10 and S14.

Functionally, binds the lower part of the 30S subunit head. Binds mRNA in the 70S ribosome, positioning it for translation. This Buchnera aphidicola subsp. Acyrthosiphon kondoi (Acyrthosiphon kondoi symbiotic bacterium) protein is Small ribosomal subunit protein uS3.